The chain runs to 916 residues: Protein translocase subunit SecA (916 aa).

ATP contacts are provided by residues glutamine 87, 105–109 (GEGKT), and aspartate 507. 4 residues coordinate Zn(2+): cysteine 900, cysteine 902, cysteine 911, and histidine 912.

The protein belongs to the SecA family. Monomer and homodimer. Part of the essential Sec protein translocation apparatus which comprises SecA, SecYEG and auxiliary proteins SecDF-YajC and YidC. The cofactor is Zn(2+).

Its subcellular location is the cell inner membrane. It localises to the cytoplasm. The enzyme catalyses ATP + H2O + cellular proteinSide 1 = ADP + phosphate + cellular proteinSide 2.. Functionally, part of the Sec protein translocase complex. Interacts with the SecYEG preprotein conducting channel. Has a central role in coupling the hydrolysis of ATP to the transfer of proteins into and across the cell membrane, serving both as a receptor for the preprotein-SecB complex and as an ATP-driven molecular motor driving the stepwise translocation of polypeptide chains across the membrane. This Neisseria meningitidis serogroup A / serotype 4A (strain DSM 15465 / Z2491) protein is Protein translocase subunit SecA.